We begin with the raw amino-acid sequence, 103 residues long: UPF0145 protein BCE33L0904 (103 aa).

The protein belongs to the UPF0145 family.

This chain is UPF0145 protein BCE33L0904, found in Bacillus cereus (strain ZK / E33L).